The sequence spans 385 residues: Succinyl-diaminopimelate desuccinylase (385 aa).

His73 lines the Zn(2+) pocket. Asp75 is a catalytic residue. Asp106 lines the Zn(2+) pocket. Glu141 serves as the catalytic Proton acceptor. Residues Glu142, Glu170, and His359 each contribute to the Zn(2+) site.

The protein belongs to the peptidase M20A family. DapE subfamily. In terms of assembly, homodimer. It depends on Zn(2+) as a cofactor. The cofactor is Co(2+).

The catalysed reaction is N-succinyl-(2S,6S)-2,6-diaminopimelate + H2O = (2S,6S)-2,6-diaminopimelate + succinate. The protein operates within amino-acid biosynthesis; L-lysine biosynthesis via DAP pathway; LL-2,6-diaminopimelate from (S)-tetrahydrodipicolinate (succinylase route): step 3/3. Catalyzes the hydrolysis of N-succinyl-L,L-diaminopimelic acid (SDAP), forming succinate and LL-2,6-diaminopimelate (DAP), an intermediate involved in the bacterial biosynthesis of lysine and meso-diaminopimelic acid, an essential component of bacterial cell walls. The protein is Succinyl-diaminopimelate desuccinylase of Methylorubrum extorquens (strain PA1) (Methylobacterium extorquens).